We begin with the raw amino-acid sequence, 577 residues long: External alternative NAD(P)H-ubiquinone oxidoreductase B1, mitochondrial (577 aa).

Residues M1 to A35 constitute a mitochondrion transit peptide. R57–R87 provides a ligand contact to FAD. Residue L221–F257 participates in NAD(+) binding. One can recognise an EF-hand domain in the interval K378–R413. Positions 391, 393, 395, 397, and 402 each coordinate Ca(2+). A Microbody targeting signal motif is present at residues Y568–I577.

Belongs to the NADH dehydrogenase family. It depends on FAD as a cofactor.

It localises to the mitochondrion inner membrane. Its subcellular location is the peroxisome. The catalysed reaction is a quinone + NADH + H(+) = a quinol + NAD(+). The enzyme catalyses a ubiquinone + NADH + H(+) = a ubiquinol + NAD(+). Its activity is regulated as follows. Activity is calcium-dependent with a more pronounced effect at higher pH. Calcium-dependent NAD(P)H dehydrogenase. Binds calcium ions. Alternative NADH-ubiquinone oxidoreductase which catalyzes the oxidation of mitochondrial NADH does not translocate protons across the inner mitochondrial membrane. This Solanum tuberosum (Potato) protein is External alternative NAD(P)H-ubiquinone oxidoreductase B1, mitochondrial (NDB1).